The following is a 139-amino-acid chain: Putative pre-16S rRNA nuclease (139 aa).

The protein belongs to the YqgF nuclease family.

Its subcellular location is the cytoplasm. Could be a nuclease involved in processing of the 5'-end of pre-16S rRNA. This is Putative pre-16S rRNA nuclease from Streptococcus mutans serotype c (strain ATCC 700610 / UA159).